The primary structure comprises 141 residues: Hemoglobin subunit alpha (141 aa).

In terms of domain architecture, Globin spans 1–141 (VLSSADKANI…VSTVLTSKYR (141 aa)). The residue at position 3 (Ser-3) is a Phosphoserine. 2 positions are modified to N6-succinyllysine: Lys-7 and Lys-11. An N6-acetyllysine; alternate modification is found at Lys-16. An N6-succinyllysine; alternate modification is found at Lys-16. Tyr-24 is modified (phosphotyrosine). Lys-40 is subject to N6-succinyllysine. Residue Ser-49 is modified to Phosphoserine. His-58 serves as a coordination point for O2. His-87 serves as a coordination point for heme b. Ser-102 is subject to Phosphoserine. Thr-108 carries the post-translational modification Phosphothreonine. Position 131 is a phosphoserine (Ser-131). 2 positions are modified to phosphothreonine: Thr-134 and Thr-137. A Phosphoserine modification is found at Ser-138.

The protein belongs to the globin family. Heterotetramer of two alpha chains and two beta chains. As to expression, red blood cells.

Its function is as follows. Involved in oxygen transport from the lung to the various peripheral tissues. In terms of biological role, hemopressin acts as an antagonist peptide of the cannabinoid receptor CNR1. Hemopressin-binding efficiently blocks cannabinoid receptor CNR1 and subsequent signaling. The sequence is that of Hemoglobin subunit alpha (HBA) from Crocuta crocuta (Spotted hyena).